Consider the following 112-residue polypeptide: Inner membrane assembly complex subunit 17 (112 aa).

Residues 1-24 (MLRKLPINFAKWTVKKVPVQQKRF) constitute a mitochondrion transit peptide. Over 25–44 (NSQQKEISPHIMFYKNYARP) the chain is Mitochondrial matrix. A helical membrane pass occupies residues 45–62 (LGKVTLFALATYYGLEIV). At 63 to 112 (WWKLDASEQEAIKNSKLLICESSFSLLTFRRITEFRECEIKTRDLYDPEI) the chain is on the mitochondrial intermembrane side.

It belongs to the INA17 family. Component of the inner membrane assembly (INA) complex. Interacts with a subset of F(1)F(0)-ATP synthase subunits of the F(1)-domain and the peripheral stalk.

It is found in the mitochondrion inner membrane. Functionally, component of the INA complex (INAC) that promotes the biogenesis of mitochondrial F(1)F(0)-ATP synthase. INAC facilitates the assembly of the peripheral stalk and promotes the assembly of the catalytic F(1)-domain with the membrane-embedded F(0)-domain. This is Inner membrane assembly complex subunit 17 from Schizosaccharomyces pombe (strain 972 / ATCC 24843) (Fission yeast).